A 234-amino-acid chain; its full sequence is Phosphoglycolate phosphatase (234 aa).

Asp8 (nucleophile) is an active-site residue. The Mg(2+) site is built by Asp8 and Asp10. Lys155 serves as a coordination point for substrate. The Mg(2+) site is built by Asp178 and Asp182.

The protein belongs to the archaeal SPP-like hydrolase family. It depends on Mg(2+) as a cofactor.

It catalyses the reaction 2-phosphoglycolate + H2O = glycolate + phosphate. In terms of biological role, catalyzes the dephosphorylation of 2-phosphoglycolate. The protein is Phosphoglycolate phosphatase of Thermococcus sibiricus (strain DSM 12597 / MM 739).